Here is a 253-residue protein sequence, read N- to C-terminus: 3-deoxy-manno-octulosonate cytidylyltransferase (253 aa).

The protein belongs to the KdsB family.

Its subcellular location is the cytoplasm. The enzyme catalyses 3-deoxy-alpha-D-manno-oct-2-ulosonate + CTP = CMP-3-deoxy-beta-D-manno-octulosonate + diphosphate. It participates in nucleotide-sugar biosynthesis; CMP-3-deoxy-D-manno-octulosonate biosynthesis; CMP-3-deoxy-D-manno-octulosonate from 3-deoxy-D-manno-octulosonate and CTP: step 1/1. It functions in the pathway bacterial outer membrane biogenesis; lipopolysaccharide biosynthesis. Functionally, activates KDO (a required 8-carbon sugar) for incorporation into bacterial lipopolysaccharide in Gram-negative bacteria. This is 3-deoxy-manno-octulosonate cytidylyltransferase from Neisseria meningitidis serogroup C (strain 053442).